The primary structure comprises 679 residues: DNA ligase (679 aa).

Residues 36-40 and 94-95 contribute to the NAD(+) site; these read DEYYD and SL. The N6-AMP-lysine intermediate role is filled by lysine 126. Residues arginine 147, glutamate 181, lysine 299, and lysine 323 each coordinate NAD(+). Cysteine 415, cysteine 418, cysteine 433, and cysteine 438 together coordinate Zn(2+). Residues 603–679 enclose the BRCT domain; it reads IQSTKLENKT…DEEFLKKMLE (77 aa).

This sequence belongs to the NAD-dependent DNA ligase family. LigA subfamily. Requires Mg(2+) as cofactor. It depends on Mn(2+) as a cofactor.

It carries out the reaction NAD(+) + (deoxyribonucleotide)n-3'-hydroxyl + 5'-phospho-(deoxyribonucleotide)m = (deoxyribonucleotide)n+m + AMP + beta-nicotinamide D-nucleotide.. Its function is as follows. DNA ligase that catalyzes the formation of phosphodiester linkages between 5'-phosphoryl and 3'-hydroxyl groups in double-stranded DNA using NAD as a coenzyme and as the energy source for the reaction. It is essential for DNA replication and repair of damaged DNA. In Mycoplasmopsis pulmonis (strain UAB CTIP) (Mycoplasma pulmonis), this protein is DNA ligase.